Consider the following 671-residue polypeptide: UBA domain-containing protein RUP1 (671 aa).

In terms of domain architecture, UBA spans 1–41 (MMDNQAVKSLLEMGIPHEVAVDALQRTGGNLEAAVNFIFSN). Ser-56 bears the Phosphoserine mark. Residues 68–87 (GTKPCDVPNNGDQDIDMPDV) form a disordered region. Residues 432 to 501 (SKRKQARTRS…LNSARAAKME (70 aa)) are a coiled coil. Residues 643 to 671 (DGMGDPEQATNNINNGNDNDNDDDIDSDN) are disordered. Acidic residues predominate over residues 661 to 671 (NDNDDDIDSDN).

Forms a ternary complex with RSP5 and UBP2.

Its subcellular location is the cytoplasm. The protein localises to the nucleus. Its function is as follows. Modulates the activity of the RSP5 HECT ubiquitin-protein ligase through its mediation of the interaction between RSP5 and the deubiquitinase UBP2. Involved in regulation of cell wall homeostasis. The sequence is that of UBA domain-containing protein RUP1 (RUP1) from Saccharomyces cerevisiae (strain ATCC 204508 / S288c) (Baker's yeast).